The chain runs to 251 residues: 5'-nucleotidase SurE (251 aa).

Aspartate 8, aspartate 9, serine 40, and asparagine 95 together coordinate a divalent metal cation.

The protein belongs to the SurE nucleotidase family. A divalent metal cation is required as a cofactor.

Its subcellular location is the cytoplasm. The catalysed reaction is a ribonucleoside 5'-phosphate + H2O = a ribonucleoside + phosphate. Its function is as follows. Nucleotidase that shows phosphatase activity on nucleoside 5'-monophosphates. This chain is 5'-nucleotidase SurE, found in Desulfitobacterium hafniense (strain DSM 10664 / DCB-2).